A 149-amino-acid chain; its full sequence is Protein SprT-like (149 aa).

A SprT-like domain is found at 4–144 (TDYVKQVSLE…GLCRGKLLLV (141 aa)). H64 serves as a coordination point for Zn(2+). Residue E65 is part of the active site. H68 provides a ligand contact to Zn(2+).

This sequence belongs to the SprT family. It depends on Zn(2+) as a cofactor.

Its subcellular location is the cytoplasm. In Streptococcus pneumoniae serotype 4 (strain ATCC BAA-334 / TIGR4), this protein is Protein SprT-like.